Reading from the N-terminus, the 110-residue chain is UPF0122 protein SAR1212 (110 aa).

It belongs to the UPF0122 family.

In terms of biological role, might take part in the signal recognition particle (SRP) pathway. This is inferred from the conservation of its genetic proximity to ftsY/ffh. May be a regulatory protein. This chain is UPF0122 protein SAR1212, found in Staphylococcus aureus (strain MRSA252).